A 178-amino-acid chain; its full sequence is Caveolin-1 (178 aa).

Ser2 carries the N-acetylserine modification. Ser2 is subject to Phosphoserine. The segment at 2–94 is required for homooligomerization; sequence SGGKYVDSEG…WKASFTTFTV (93 aa). Residues 2–104 are Cytoplasmic-facing; it reads SGGKYVDSEG…TKYWFYRLLS (103 aa). An N6-acetyllysine; alternate modification is found at Lys5. Residue Lys5 forms a Glycyl lysine isopeptide (Lys-Gly) (interchain with G-Cter in ubiquitin); alternate linkage. At Tyr6 the chain carries Phosphotyrosine. Ser9 bears the Phosphoserine mark. Tyr14 bears the Phosphotyrosine; by ABL1 mark. Tyr25 carries the phosphotyrosine modification. Glycyl lysine isopeptide (Lys-Gly) (interchain with G-Cter in ubiquitin) cross-links involve residues Lys26, Lys30, Lys39, Lys47, and Lys57. The tract at residues 82–94 is interaction with CAVIN3; it reads DGIWKASFTTFTV. Positions 105–125 form an intramembrane region, helical; that stretch reads SLVGIPVALIWGIYFAILSFL. Over 126 to 178 the chain is Cytoplasmic; sequence YIWAVVPCIKSFLIKIQCISRIYSICIHTFCDPLYEAIGKIFSNIRISMQKEI. The segment at 131–142 is interacts with SPRY1, SPRY2, SPRY3 and SPRY4; sequence VPCIKSFLIKIQ. S-palmitoyl cysteine attachment occurs at residues Cys133, Cys143, and Cys156. Residues 149–160 form an interacts with SPRY1, SPRY2, and SPRY4 region; the sequence is SICIHTFCDPLY. The tract at residues 167–178 is interacts with SPRY1, SPRY2, SPRY3 and SPRY4; the sequence is FSNIRISMQKEI.

Belongs to the caveolin family. As to quaternary structure, homooligomer. Interacts with GLIPR2. Interacts with NOSTRIN. Interacts with SNAP25 and STX1A. Interacts (via the N-terminus) with DPP4; the interaction is direct. Interacts with CTNNB1, CDH1 and JUP. Interacts with PACSIN2; this interaction induces membrane tubulation. Interacts with SLC7A9. Interacts with BMX and BTK. Interacts with TGFBR1. Interacts with CAVIN3 (via leucine-zipper domain) in a cholesterol-sensitive manner. Interacts with CAVIN1. Interacts with EHD2 in a cholesterol-dependent manner. Forms a ternary complex with UBXN6 and VCP; mediates CAV1 targeting to lysosomes for degradation. Interacts with ABCG1; this interaction regulates ABCG1-mediated cholesterol efflux. Interacts with NEU3; this interaction enhances NEU3 sialidase activity within caveola. Interacts (via C-terminus) with SPRY1, SPRY2 (via C-terminus), SPRY3, and SPRY4. Interacts with IGFBP5; this interaction allows trafficking of IGFBP5 from the plasma membrane to the nucleus. Post-translationally, phosphorylated at Tyr-14 by ABL1 in response to oxidative stress. In terms of processing, ubiquitinated. Undergo monoubiquitination and multi- and/or polyubiquitination. Monoubiquitination of N-terminal lysines promotes integration in a ternary complex with UBXN6 and VCP which promotes oligomeric CAV1 targeting to lysosomes for degradation. Ubiquitinated by ZNRF1; leading to degradation and modulation of the TLR4-mediated immune response.

It localises to the golgi apparatus membrane. The protein resides in the cell membrane. The protein localises to the membrane. Its subcellular location is the caveola. It is found in the membrane raft. May act as a scaffolding protein within caveolar membranes. Forms a stable heterooligomeric complex with CAV2 that targets to lipid rafts and drives caveolae formation. Mediates the recruitment of CAVIN proteins (CAVIN1/2/3/4) to the caveolae. Interacts directly with G-protein alpha subunits and can functionally regulate their activity. Involved in the costimulatory signal essential for T-cell receptor (TCR)-mediated T-cell activation. Its binding to DPP4 induces T-cell proliferation and NF-kappa-B activation in a T-cell receptor/CD3-dependent manner. Recruits CTNNB1 to caveolar membranes and may regulate CTNNB1-mediated signaling through the Wnt pathway. Negatively regulates TGFB1-mediated activation of SMAD2/3 by mediating the internalization of TGFBR1 from membrane rafts leading to its subsequent degradation. Binds 20(S)-hydroxycholesterol (20(S)-OHC). The chain is Caveolin-1 (CAV1) from Atelerix albiventris (Middle-African hedgehog).